A 265-amino-acid chain; its full sequence is Glutamate racemase (265 aa).

Residues 9 to 10 and 41 to 42 contribute to the substrate site; these read DS and YS. Catalysis depends on C73, which acts as the Proton donor/acceptor. 74–75 lines the substrate pocket; it reads NT. The active-site Proton donor/acceptor is C184. 185–186 serves as a coordination point for substrate; it reads TH.

This sequence belongs to the aspartate/glutamate racemases family.

The catalysed reaction is L-glutamate = D-glutamate. The protein operates within cell wall biogenesis; peptidoglycan biosynthesis. Its function is as follows. Provides the (R)-glutamate required for cell wall biosynthesis. The chain is Glutamate racemase from Haemophilus ducreyi (strain 35000HP / ATCC 700724).